The chain runs to 117 residues: Holo-[acyl-carrier-protein] synthase (117 aa).

2 residues coordinate Mg(2+): D8 and E58.

The protein belongs to the P-Pant transferase superfamily. AcpS family. Requires Mg(2+) as cofactor.

The protein resides in the cytoplasm. The catalysed reaction is apo-[ACP] + CoA = holo-[ACP] + adenosine 3',5'-bisphosphate + H(+). Functionally, transfers the 4'-phosphopantetheine moiety from coenzyme A to a Ser of acyl-carrier-protein. The chain is Holo-[acyl-carrier-protein] synthase from Latilactobacillus sakei subsp. sakei (strain 23K) (Lactobacillus sakei subsp. sakei).